The sequence spans 237 residues: Pyridoxal phosphate homeostasis protein (237 aa).

An N6-(pyridoxal phosphate)lysine modification is found at lysine 31.

This sequence belongs to the pyridoxal phosphate-binding protein YggS/PROSC family.

It is found in the cytoplasm. The protein localises to the nucleus. Its function is as follows. Pyridoxal 5'-phosphate (PLP)-binding protein, which may be involved in intracellular homeostatic regulation of pyridoxal 5'-phosphate (PLP), the active form of vitamin B6. This Schizosaccharomyces pombe (strain 972 / ATCC 24843) (Fission yeast) protein is Pyridoxal phosphate homeostasis protein.